Here is a 141-residue protein sequence, read N- to C-terminus: HTH-type transcriptional repressor NsrR (141 aa).

The region spanning 2-129 (QLTSFTDYAL…DDCTIEELLS (128 aa)) is the HTH rrf2-type domain. A DNA-binding region (H-T-H motif) is located at residues 28 to 51 (ITEVTDLFGVSRNHMVKVINRLGQ). [2Fe-2S] cluster is bound by residues cysteine 91, cysteine 96, and cysteine 102.

[2Fe-2S] cluster serves as cofactor.

Nitric oxide-sensitive repressor of genes involved in protecting the cell against nitrosative stress. May require iron for activity. This chain is HTH-type transcriptional repressor NsrR, found in Vibrio campbellii (strain ATCC BAA-1116).